Reading from the N-terminus, the 306-residue chain is MVESLPTTFSDSVHIAVIGGTGLQSLEGFIPIATINPLTPWGYPSAPIHILSHNNTPIAFLSRHGTHHELAPHEIPNRANIAALRSMGVRTIIAFSAVGSLREEIKPRDFVVPDQVIDRTKGVRPFTFFEKGVVGHVGFADPFDERIAKVVRECGHALEGEGIVLHDKGTIICMEGPAFSTRAESHMYRSWGGSVINMSALPEAKLAREAEMVYQMICMATDYDCWHSTADVDVEMVMGHMHANGQNAKRLVGAVLDALNMRWSTIDSIRRRKNKPELANAQQHQIWRGRTYHFAWSISACYFSSE.

Phosphate is bound by residues Thr21, 63-64 (RH), and 96-97 (SA). Met198 is a substrate binding site. Ser199 contacts phosphate. Substrate is bound at residue 222-224 (DYD).

It belongs to the PNP/MTAP phosphorylase family. MTAP subfamily. Homotrimer.

It is found in the cytoplasm. Its subcellular location is the nucleus. The enzyme catalyses S-methyl-5'-thioadenosine + phosphate = 5-(methylsulfanyl)-alpha-D-ribose 1-phosphate + adenine. The protein operates within amino-acid biosynthesis; L-methionine biosynthesis via salvage pathway; S-methyl-5-thio-alpha-D-ribose 1-phosphate from S-methyl-5'-thioadenosine (phosphorylase route): step 1/1. In terms of biological role, catalyzes the reversible phosphorylation of S-methyl-5'-thioadenosine (MTA) to adenine and 5-methylthioribose-1-phosphate. Involved in the breakdown of MTA, a major by-product of polyamine biosynthesis. Responsible for the first step in the methionine salvage pathway after MTA has been generated from S-adenosylmethionine. Has broad substrate specificity with 6-aminopurine nucleosides as preferred substrates. This is S-methyl-5'-thioadenosine phosphorylase from Sclerotinia sclerotiorum (strain ATCC 18683 / 1980 / Ss-1) (White mold).